Reading from the N-terminus, the 185-residue chain is Ribosome-recycling factor (185 aa).

The protein belongs to the RRF family.

Its subcellular location is the cytoplasm. Functionally, responsible for the release of ribosomes from messenger RNA at the termination of protein biosynthesis. May increase the efficiency of translation by recycling ribosomes from one round of translation to another. In Legionella pneumophila (strain Paris), this protein is Ribosome-recycling factor.